The chain runs to 104 residues: MTHEGKEPVDLRVIRELWGVICERADCPDENSYTSRLLQDVKGIDKVLEKVGEESTEFILAVKNGVPERTTEEAADLFFHVLVALRAADVDLSGVIRELERRRK.

It belongs to the PRA-PH family.

The protein resides in the cytoplasm. The catalysed reaction is 1-(5-phospho-beta-D-ribosyl)-ATP + H2O = 1-(5-phospho-beta-D-ribosyl)-5'-AMP + diphosphate + H(+). The protein operates within amino-acid biosynthesis; L-histidine biosynthesis; L-histidine from 5-phospho-alpha-D-ribose 1-diphosphate: step 2/9. This chain is Phosphoribosyl-ATP pyrophosphatase, found in Methanoregula boonei (strain DSM 21154 / JCM 14090 / 6A8).